The primary structure comprises 602 residues: Elongation factor 4 (602 aa).

The 183-residue stretch at 7–189 (KHIRNFSIVA…AIVDKIPSPQ (183 aa)) folds into the tr-type G domain. GTP-binding positions include 19–24 (DHGKST) and 136–139 (NKID).

The protein belongs to the TRAFAC class translation factor GTPase superfamily. Classic translation factor GTPase family. LepA subfamily.

The protein localises to the cell membrane. The enzyme catalyses GTP + H2O = GDP + phosphate + H(+). Functionally, required for accurate and efficient protein synthesis under certain stress conditions. May act as a fidelity factor of the translation reaction, by catalyzing a one-codon backward translocation of tRNAs on improperly translocated ribosomes. Back-translocation proceeds from a post-translocation (POST) complex to a pre-translocation (PRE) complex, thus giving elongation factor G a second chance to translocate the tRNAs correctly. Binds to ribosomes in a GTP-dependent manner. The chain is Elongation factor 4 from Clostridium kluyveri (strain ATCC 8527 / DSM 555 / NBRC 12016 / NCIMB 10680 / K1).